Reading from the N-terminus, the 304-residue chain is Porphobilinogen deaminase (304 aa).

Cysteine 240 bears the S-(dipyrrolylmethanemethyl)cysteine mark.

The protein belongs to the HMBS family. As to quaternary structure, monomer. The cofactor is dipyrromethane.

It carries out the reaction 4 porphobilinogen + H2O = hydroxymethylbilane + 4 NH4(+). It participates in porphyrin-containing compound metabolism; protoporphyrin-IX biosynthesis; coproporphyrinogen-III from 5-aminolevulinate: step 2/4. In terms of biological role, tetrapolymerization of the monopyrrole PBG into the hydroxymethylbilane pre-uroporphyrinogen in several discrete steps. This Xanthomonas campestris pv. campestris (strain ATCC 33913 / DSM 3586 / NCPPB 528 / LMG 568 / P 25) protein is Porphobilinogen deaminase.